The following is a 239-amino-acid chain: tRNA (guanine-N(1)-)-methyltransferase (239 aa).

Residues G112 and 132-137 contribute to the S-adenosyl-L-methionine site; that span reads IGDYVL.

Belongs to the RNA methyltransferase TrmD family. In terms of assembly, homodimer.

Its subcellular location is the cytoplasm. It catalyses the reaction guanosine(37) in tRNA + S-adenosyl-L-methionine = N(1)-methylguanosine(37) in tRNA + S-adenosyl-L-homocysteine + H(+). In terms of biological role, specifically methylates guanosine-37 in various tRNAs. The chain is tRNA (guanine-N(1)-)-methyltransferase from Rhodospirillum rubrum (strain ATCC 11170 / ATH 1.1.1 / DSM 467 / LMG 4362 / NCIMB 8255 / S1).